A 601-amino-acid chain; its full sequence is Adenine deaminase (601 aa).

It belongs to the metallo-dependent hydrolases superfamily. Adenine deaminase family. It depends on Mn(2+) as a cofactor.

The catalysed reaction is adenine + H2O + H(+) = hypoxanthine + NH4(+). In Ruegeria sp. (strain TM1040) (Silicibacter sp.), this protein is Adenine deaminase.